A 339-amino-acid polypeptide reads, in one-letter code: Glycerol-3-phosphate dehydrogenase [NAD(P)+] (339 aa).

The NADPH site is built by S15, Y16, H36, and K110. Residues K110, G139, and T141 each coordinate sn-glycerol 3-phosphate. A143 lines the NADPH pocket. Positions 195, 248, 258, 259, and 260 each coordinate sn-glycerol 3-phosphate. The active-site Proton acceptor is the K195. R259 is an NADPH binding site. NADPH is bound by residues V283 and E285.

The protein belongs to the NAD-dependent glycerol-3-phosphate dehydrogenase family.

It localises to the cytoplasm. It carries out the reaction sn-glycerol 3-phosphate + NAD(+) = dihydroxyacetone phosphate + NADH + H(+). It catalyses the reaction sn-glycerol 3-phosphate + NADP(+) = dihydroxyacetone phosphate + NADPH + H(+). It participates in membrane lipid metabolism; glycerophospholipid metabolism. Functionally, catalyzes the reduction of the glycolytic intermediate dihydroxyacetone phosphate (DHAP) to sn-glycerol 3-phosphate (G3P), the key precursor for phospholipid synthesis. This chain is Glycerol-3-phosphate dehydrogenase [NAD(P)+], found in Shigella flexneri serotype 5b (strain 8401).